The chain runs to 118 residues: MRSKFKDEHPFEKRKAEAERIRQKYADRIPVICEKVEKSDIATIDKKKYLVPADLTVGQFVYVIRKRIKLSPEKAIFIFVDEVLPPTAALMSSIYEEHKDEDGFLYITYSGENTFGEA.

Gly-116 carries Phosphatidylethanolamine amidated glycine lipidation. Residues 117-118 constitute a propeptide, removed in mature form; sequence EA.

Belongs to the ATG8 family. In terms of assembly, conjugation to phosphatidylethanolamine (PE) leads to homodimerization. Interacts with ATG1, ATG3, ATG4, ATG7 and ATG12. Post-translationally, the C-terminal Glu-117 and Ala-118 residues of ATG8 are removed by ATG4 to expose Gly-116 at the C-terminus. This Gly-116 forms then a thioester bond with the 'Cys-550' of ATG7 (E1-like activating enzyme) before being transferred to the 'Cys-244' of ATG3 (the specific E2 conjugating enzyme), in order to be finally amidated with phosphatidylethanolamine. This lipid modification anchors ATG8 to membranes and can be reversed by ATG4, releasing soluble ATG8.

It localises to the cytoplasmic vesicle. It is found in the cvt vesicle membrane. The protein localises to the autophagosome membrane. The protein resides in the vacuole membrane. Functionally, ubiquitin-like modifier involved in cytoplasm to vacuole transport (Cvt) vesicles and autophagosome formation. With ATG4, mediates the delivery of the vesicles and autophagosomes to the vacuole via the microtubule cytoskeleton. Required for selective autophagic degradation of the nucleus (nucleophagy) as well as for mitophagy which contributes to regulate mitochondrial quantity and quality by eliminating the mitochondria to a basal level to fulfill cellular energy requirements and preventing excess ROS production. Also participates in membrane fusion events that take place in the early secretory pathway. Also involved in endoplasmic reticulum-specific autophagic process and is essential for the survival of cells subjected to severe ER stress. The ATG8-PE conjugate mediates tethering between adjacent membranes and stimulates membrane hemifusion, leading to expansion of the autophagosomal membrane during autophagy. Moreover not only conjugation, but also subsequent ATG8-PE deconjugation is an important step required to facilitate multiple events during macroautophagy, and especially for efficient autophagosome biogenesis, the assembly of ATG9-containing tubulovesicular clusters into phagophores/autophagosomes, and for the disassembly of PAS-associated ATG components. Autophagy is required for proper vegetative growth, asexual/sexual reproduction, and full virulence. Autophagy is particularly involved in the biosynthesis of deoxynivalenol (DON), an important virulence determinant. The polypeptide is Autophagy-related protein 8 (Gibberella zeae (strain ATCC MYA-4620 / CBS 123657 / FGSC 9075 / NRRL 31084 / PH-1) (Wheat head blight fungus)).